Reading from the N-terminus, the 131-residue chain is Fatty acid-binding protein (131 aa).

(5Z,8Z,11Z,14Z)-eicosatetraenoate is bound by residues arginine 106 and arginine 126–tyrosine 128. (9Z)-octadecenoate-binding positions include arginine 106 and arginine 126–tyrosine 128.

Belongs to the calycin superfamily. Fatty-acid binding protein (FABP) family.

It is found in the cytoplasm. Its function is as follows. FABPs are thought to play a role in the intracellular transport of long-chain fatty acids and their acyl-CoA esters. This is Fatty acid-binding protein from Lepidoglyphus destructor (Storage mite).